Consider the following 270-residue polypeptide: Checkpoint signal transducer rad25 (270 aa).

A phosphoserine mark is found at Ser234 and Ser253. The disordered stretch occupies residues 240-270 (QSAKEEAPAAAAASENEHPEPKESTTDTVKA). Basic and acidic residues predominate over residues 254 to 270 (ENEHPEPKESTTDTVKA).

It belongs to the 14-3-3 family. In terms of assembly, interacts with rad24. Interacts with byr2.

The protein localises to the cytoplasm. Functionally, acts in cell cycle and stress checkpoint signaling by sequestering signal transducers regulated by the checkpoints. Required for the DNA damage checkpoint that ensures that DNA damage is repaired before mitosis is attempted. Sequesters byr2 in the cytoplasm to prevent its translocation to the plasma membrane. The polypeptide is Checkpoint signal transducer rad25 (Schizosaccharomyces pombe (strain 972 / ATCC 24843) (Fission yeast)).